The sequence spans 251 residues: Probable transcriptional regulatory protein DehaBAV1_0421 (251 aa).

Belongs to the TACO1 family.

The protein localises to the cytoplasm. In Dehalococcoides mccartyi (strain ATCC BAA-2100 / JCM 16839 / KCTC 5957 / BAV1), this protein is Probable transcriptional regulatory protein DehaBAV1_0421.